The chain runs to 288 residues: ATP synthase gamma chain (288 aa).

The protein belongs to the ATPase gamma chain family. F-type ATPases have 2 components, CF(1) - the catalytic core - and CF(0) - the membrane proton channel. CF(1) has five subunits: alpha(3), beta(3), gamma(1), delta(1), epsilon(1). CF(0) has three main subunits: a, b and c.

The protein resides in the cell inner membrane. Its function is as follows. Produces ATP from ADP in the presence of a proton gradient across the membrane. The gamma chain is believed to be important in regulating ATPase activity and the flow of protons through the CF(0) complex. This is ATP synthase gamma chain from Vibrio cholerae serotype O1 (strain ATCC 39541 / Classical Ogawa 395 / O395).